A 385-amino-acid chain; its full sequence is Chaperone protein DnaJ (385 aa).

The J domain occupies 3–68; sequence DYYEILGVTR…QKRAAYDRFG (66 aa). Residues 135–213 form a CR-type zinc finger; that stretch reads GAEVEITVPA…CHGHGQVRRE (79 aa). 8 residues coordinate Zn(2+): C148, C151, C165, C168, C187, C190, C201, and C204. CXXCXGXG motif repeat units lie at residues 148 to 155, 165 to 172, 187 to 194, and 201 to 208; these read CEVCEGSG, CGTCGGAG, CPRCGGSG, and CSNCHGHG.

This sequence belongs to the DnaJ family. Homodimer. Requires Zn(2+) as cofactor.

Its subcellular location is the cytoplasm. Functionally, participates actively in the response to hyperosmotic and heat shock by preventing the aggregation of stress-denatured proteins and by disaggregating proteins, also in an autonomous, DnaK-independent fashion. Unfolded proteins bind initially to DnaJ; upon interaction with the DnaJ-bound protein, DnaK hydrolyzes its bound ATP, resulting in the formation of a stable complex. GrpE releases ADP from DnaK; ATP binding to DnaK triggers the release of the substrate protein, thus completing the reaction cycle. Several rounds of ATP-dependent interactions between DnaJ, DnaK and GrpE are required for fully efficient folding. Also involved, together with DnaK and GrpE, in the DNA replication of plasmids through activation of initiation proteins. The polypeptide is Chaperone protein DnaJ (Caulobacter vibrioides (strain ATCC 19089 / CIP 103742 / CB 15) (Caulobacter crescentus)).